A 190-amino-acid chain; its full sequence is Shikimate kinase (190 aa).

14-19 serves as a coordination point for ATP; the sequence is GSGKST. Serine 18 contacts Mg(2+). Positions 36, 60, and 82 each coordinate substrate. An ATP-binding site is contributed by arginine 120. Position 147 (arginine 147) interacts with substrate.

Belongs to the shikimate kinase family. In terms of assembly, monomer. Requires Mg(2+) as cofactor.

The protein localises to the cytoplasm. It carries out the reaction shikimate + ATP = 3-phosphoshikimate + ADP + H(+). It participates in metabolic intermediate biosynthesis; chorismate biosynthesis; chorismate from D-erythrose 4-phosphate and phosphoenolpyruvate: step 5/7. Catalyzes the specific phosphorylation of the 3-hydroxyl group of shikimic acid using ATP as a cosubstrate. The polypeptide is Shikimate kinase (Chlorobium phaeobacteroides (strain DSM 266 / SMG 266 / 2430)).